The primary structure comprises 208 residues: CASP-like protein 2A1 (208 aa).

Residues 1-36 (MSKMAEQKAAAVDGLGGAGAADAAPAGEAAAARVRP) lie on the Cytoplasmic side of the membrane. The chain crosses the membrane as a helical span at residues 37–57 (VETLLRAAPLGLCVAAMTVML). Residues 58–78 (RDQQSNEYGTVAYSDLGGFKY) lie on the Extracellular side of the membrane. Residues 79–99 (LVYANGLCAAYSLVSAFYTAV) traverse the membrane as a helical segment. At 100-108 (PRPATVSRS) the chain is on the cytoplasmic side. A helical membrane pass occupies residues 109–129 (WVVFLLDQVFTYLILAAGAAA). Residues 130–161 (AELLYLAYNGDKEVTWSEACGVFGSFCRQART) lie on the Extracellular side of the membrane. The chain crosses the membrane as a helical span at residues 162 to 182 (SVAITFGTVLCFILLSLISSY). Residues 183 to 208 (RLFSAYEAPPSSALGSKGVEIAAYPR) are Cytoplasmic-facing.

The protein belongs to the Casparian strip membrane proteins (CASP) family. Homodimer and heterodimers.

It localises to the cell membrane. The polypeptide is CASP-like protein 2A1 (Sorghum bicolor (Sorghum)).